A 521-amino-acid chain; its full sequence is Organic cation/carnitine transporter 6 (521 aa).

At 1-37 (MADPISEPLLSHLTDDSGVNEKTRLEALTFDKIVEQS) the chain is on the cytoplasmic side. Residues 38-58 (LSDFGFWQFFQISLVGLALLF) form a helical membrane-spanning segment. The Extracellular segment spans residues 59–123 (DAQQIFITVY…GLECSSSLLR (65 aa)). Asn79 carries N-linked (GlcNAc...) asparagine glycosylation. The chain crosses the membrane as a helical span at residues 124 to 144 (GMPSSAFYIGAIVGGFFLALI). Over 145 to 154 (PDDSLGRKKL) the chain is Cytoplasmic. Residues 155 to 177 (VLFSTFAMSITSISVIFSTNVWI) traverse the membrane as a helical segment. Topologically, residues 178–182 (YTFLK) are extracellular. The chain crosses the membrane as a helical span at residues 183–200 (FIIGFSRSQTWSYALVLI). Position 200–207 (200–207 (ISERVSTR)) interacts with ATP. Residues 201-213 (SERVSTRWRPRAT) are Cytoplasmic-facing. The helical transmembrane segment at 214-234 (MIPFTLFVLGFMSLSGIAFLA) threads the bilayer. Residues 235–241 (QDSSWRY) lie on the Extracellular side of the membrane. Residues 242–262 (LYLYTSVPAVFYCIFLYLFAL) traverse the membrane as a helical segment. At 263–326 (ESPRWLHMQG…FFFRKWAFRR (64 aa)) the chain is on the cytoplasmic side. Residues 327–347 (ILVVMIIMFGLGISYYGVPLA) traverse the membrane as a helical segment. The Extracellular portion of the chain corresponds to 348 to 356 (ARDIDVNIY). The helical transmembrane segment at 357 to 377 (LSETLNALVELPTFVITPILL) threads the bilayer. The Cytoplasmic portion of the chain corresponds to 378–385 (ERFNRRSS). Residues 386–406 (VLVNTLLGGASGVLCFVLSIL) traverse the membrane as a helical segment. The Extracellular segment spans residues 407–412 (GKTEIA). Residues 413–433 (FAFELGTFFCARIGFNLMAVF) traverse the membrane as a helical segment. Residues 434-447 (MVEMFPTCVRSSAT) are Cytoplasmic-facing. A helical membrane pass occupies residues 448-468 (MMFRQALVVGGACCPLIASIG). Over 469–473 (RYIPS) the chain is Extracellular. A helical membrane pass occupies residues 474-494 (VSFAIFGIAMSGLGMFVLILP). Residues 495-521 (ETKGLSLCDSMEEQEKRDQAVNTSHVC) are Cytoplasmic-facing.

It belongs to the major facilitator (TC 2.A.1) superfamily. Organic cation transporter (TC 2.A.1.19) family. In terms of tissue distribution, expressed in roots and stems. In the stem of secondary inflorescences, localized to the phloem. Also present in flowers, specifically in the stamen, in the filaments and the connective, and restricted to major veins in leaves.

It localises to the vacuole membrane. Its function is as follows. High affinity carnitine transporter involved in the active cellular uptake of carnitine. Also transports organic cations. The chain is Organic cation/carnitine transporter 6 (OCT6) from Arabidopsis thaliana (Mouse-ear cress).